The following is a 146-amino-acid chain: uncharacterized protein (146 aa).

Residues 9-141 (VADIEKSLRH…FEKSLMKLQH (133 aa)) enclose the HTH marR-type domain. A DNA-binding region (H-T-H motif) is located at residues 55–78 (IGELSGKMYLACSTTTDLIDRMQK).

This is an uncharacterized protein from Bacillus subtilis (strain 168).